Consider the following 315-residue polypeptide: Type II restriction enzyme SalI (315 aa).

It carries out the reaction Endonucleolytic cleavage of DNA to give specific double-stranded fragments with terminal 5'-phosphates.. Its function is as follows. A P subtype restriction enzyme that recognizes the double-stranded sequence 5'-GTCGAC-3' and cleaves after G-1. This Streptomyces albus G protein is Type II restriction enzyme SalI.